A 268-amino-acid polypeptide reads, in one-letter code: Imidazole glycerol phosphate synthase subunit HisF (268 aa).

Active-site residues include Asp12 and Asp131.

This sequence belongs to the HisA/HisF family. Heterodimer of HisH and HisF.

Its subcellular location is the cytoplasm. The enzyme catalyses 5-[(5-phospho-1-deoxy-D-ribulos-1-ylimino)methylamino]-1-(5-phospho-beta-D-ribosyl)imidazole-4-carboxamide + L-glutamine = D-erythro-1-(imidazol-4-yl)glycerol 3-phosphate + 5-amino-1-(5-phospho-beta-D-ribosyl)imidazole-4-carboxamide + L-glutamate + H(+). It functions in the pathway amino-acid biosynthesis; L-histidine biosynthesis; L-histidine from 5-phospho-alpha-D-ribose 1-diphosphate: step 5/9. Its function is as follows. IGPS catalyzes the conversion of PRFAR and glutamine to IGP, AICAR and glutamate. The HisF subunit catalyzes the cyclization activity that produces IGP and AICAR from PRFAR using the ammonia provided by the HisH subunit. This is Imidazole glycerol phosphate synthase subunit HisF from Methanocorpusculum labreanum (strain ATCC 43576 / DSM 4855 / Z).